Reading from the N-terminus, the 599-residue chain is Proline--tRNA ligase (599 aa).

This sequence belongs to the class-II aminoacyl-tRNA synthetase family. ProS type 1 subfamily. In terms of assembly, homodimer.

It is found in the cytoplasm. The catalysed reaction is tRNA(Pro) + L-proline + ATP = L-prolyl-tRNA(Pro) + AMP + diphosphate. Functionally, catalyzes the attachment of proline to tRNA(Pro) in a two-step reaction: proline is first activated by ATP to form Pro-AMP and then transferred to the acceptor end of tRNA(Pro). As ProRS can inadvertently accommodate and process non-cognate amino acids such as alanine and cysteine, to avoid such errors it has two additional distinct editing activities against alanine. One activity is designated as 'pretransfer' editing and involves the tRNA(Pro)-independent hydrolysis of activated Ala-AMP. The other activity is designated 'posttransfer' editing and involves deacylation of mischarged Ala-tRNA(Pro). The misacylated Cys-tRNA(Pro) is not edited by ProRS. This Prochlorococcus marinus (strain MIT 9313) protein is Proline--tRNA ligase.